The sequence spans 298 residues: Inosose dehydratase (298 aa).

This sequence belongs to the IolE/MocC family. Glutathione serves as cofactor. The cofactor is Co(2+). It depends on Mn(2+) as a cofactor.

It catalyses the reaction scyllo-inosose = 3D-3,5/4-trihydroxycyclohexane-1,2-dione + H2O. Its pathway is polyol metabolism; myo-inositol degradation into acetyl-CoA; acetyl-CoA from myo-inositol: step 2/7. In terms of biological role, catalyzes the dehydration of inosose (2-keto-myo-inositol, 2KMI or 2,4,6/3,5-pentahydroxycyclohexanone) to 3D-(3,5/4)-trihydroxycyclohexane-1,2-dione (D-2,3-diketo-4-deoxy-epi-inositol). This is Inosose dehydratase from Bacillus cereus (strain AH820).